Here is a 399-residue protein sequence, read N- to C-terminus: Acetate kinase (399 aa).

Asparagine 10 provides a ligand contact to Mg(2+). ATP is bound at residue lysine 17. Position 91 (arginine 91) interacts with substrate. The active-site Proton donor/acceptor is aspartate 148. ATP-binding positions include 208–212, 283–285, and 331–335; these read HLGNG, DCR, and GIGEN. Glutamate 385 contacts Mg(2+).

This sequence belongs to the acetokinase family. As to quaternary structure, homodimer. It depends on Mg(2+) as a cofactor. Requires Mn(2+) as cofactor.

It is found in the cytoplasm. It carries out the reaction acetate + ATP = acetyl phosphate + ADP. It functions in the pathway metabolic intermediate biosynthesis; acetyl-CoA biosynthesis; acetyl-CoA from acetate: step 1/2. Its function is as follows. Catalyzes the formation of acetyl phosphate from acetate and ATP. Can also catalyze the reverse reaction. The chain is Acetate kinase from Shewanella amazonensis (strain ATCC BAA-1098 / SB2B).